Consider the following 396-residue polypeptide: RNA binding protein fox-1 homolog 1 (396 aa).

The segment at 1–119 (MNCEREQLRG…ESKSQPKRLH (119 aa)) is disordered. Residues 67 to 86 (PPTQTHSEQSADTSAQTVSG) are compositionally biased toward polar residues. Over residues 87-98 (TATQTDDAAPTD) the composition is skewed to low complexity. The segment covering 99-112 (GQPQTQPSENTESK) has biased composition (polar residues). Positions 116 to 192 (KRLHVSNIPF…RKIEVNNATA (77 aa)) constitute an RRM domain. 2 positions are modified to asymmetric dimethylarginine: Arg-316 and Ala-337. Omega-N-methylarginine is present on Arg-387.

As to quaternary structure, binds to the C-terminus of ATXN2. Detected in brain (at protein level). Detected in heart, brain, neurons, skeletal muscle and embryo.

It is found in the nucleus. It localises to the cytoplasm. Its function is as follows. RNA-binding protein that regulates alternative splicing events by binding to 5'-UGCAUGU-3' elements. Prevents binding of U2AF2 to the 3'-splice site. Regulates alternative splicing of tissue-specific exons and of differentially spliced exons during erythropoiesis. The sequence is that of RNA binding protein fox-1 homolog 1 (Rbfox1) from Mus musculus (Mouse).